The chain runs to 166 residues: MKYTSSFLALLLSVLLGFSGSYGQGPFFKEIENLKEYFNASNPDVAKGGPLFSEILKNWKEESDKKIIQSQIVSFYFKLFENLKDNQVIQRSMDIIKQDMFQKFLNGSSEKLEDFKKLIQIPVDDLQIQRKAINELIKVMNDLSPKSNLRKRKRSQNLFRGRRASM.

The N-terminal stretch at 1-23 (MKYTSSFLALLLSVLLGFSGSYG) is a signal peptide. Q24 is modified (pyrrolidone carboxylic acid). 2 N-linked (GlcNAc...) asparagine glycosylation sites follow: N39 and N106.

The protein belongs to the type II (or gamma) interferon family. In terms of assembly, homodimer. Interacts with IFNGR1 (via extracellular domain); this interaction promotes IFNGR1 dimerization. In terms of tissue distribution, released primarily from activated T lymphocytes.

It localises to the secreted. In terms of biological role, type II interferon produced by immune cells such as T-cells and NK cells that plays crucial roles in antimicrobial, antiviral, and antitumor responses by activating effector immune cells and enhancing antigen presentation. Primarily signals through the JAK-STAT pathway after interaction with its receptor IFNGR1 to affect gene regulation. Upon IFNG binding, IFNGR1 intracellular domain opens out to allow association of downstream signaling components JAK2, JAK1 and STAT1, leading to STAT1 activation, nuclear translocation and transcription of IFNG-regulated genes. Many of the induced genes are transcription factors such as IRF1 that are able to further drive regulation of a next wave of transcription. Plays a role in class I antigen presentation pathway by inducing a replacement of catalytic proteasome subunits with immunoproteasome subunits. In turn, increases the quantity, quality, and repertoire of peptides for class I MHC loading. Increases the efficiency of peptide generation also by inducing the expression of activator PA28 that associates with the proteasome and alters its proteolytic cleavage preference. Up-regulates as well MHC II complexes on the cell surface by promoting expression of several key molecules such as cathepsins B/CTSB, H/CTSH, and L/CTSL. Participates in the regulation of hematopoietic stem cells during development and under homeostatic conditions by affecting their development, quiescence, and differentiation. In Capra hircus (Goat), this protein is Interferon gamma (IFNG).